A 144-amino-acid polypeptide reads, in one-letter code: Large ribosomal subunit protein uL15 (144 aa).

Residues 1–16 (MVVRKEKKSRKYRGYR) show a composition bias toward basic residues. Residues 1–35 (MVVRKEKKSRKYRGYRTHGWGTKGQHRDRGAQGGR) form a disordered region.

It belongs to the universal ribosomal protein uL15 family. In terms of assembly, part of the 50S ribosomal subunit.

Functionally, binds to the 23S rRNA. The polypeptide is Large ribosomal subunit protein uL15 (Sulfolobus acidocaldarius (strain ATCC 33909 / DSM 639 / JCM 8929 / NBRC 15157 / NCIMB 11770)).